The primary structure comprises 154 residues: Deoxyuridine 5'-triphosphate nucleotidohydrolase (154 aa).

Residues 64 to 66 (RSG), asparagine 77, 81 to 83 (TVD), and lysine 91 each bind substrate.

It belongs to the dUTPase family. In terms of assembly, homotrimer. Requires Mg(2+) as cofactor.

The enzyme catalyses dUTP + H2O = dUMP + diphosphate + H(+). Its pathway is pyrimidine metabolism; dUMP biosynthesis; dUMP from dCTP (dUTP route): step 2/2. This enzyme is involved in nucleotide metabolism: it produces dUMP, the immediate precursor of thymidine nucleotides and it decreases the intracellular concentration of dUTP so that uracil cannot be incorporated into DNA. In Mycolicibacterium gilvum (strain PYR-GCK) (Mycobacterium gilvum (strain PYR-GCK)), this protein is Deoxyuridine 5'-triphosphate nucleotidohydrolase.